We begin with the raw amino-acid sequence, 245 residues long: 2,3-bisphosphoglycerate-dependent phosphoglycerate mutase (245 aa).

Substrate contacts are provided by residues 8 to 15, 21 to 22, Arg60, 87 to 90, Lys98, 114 to 115, and 183 to 184; these read RHGQSLWN, TG, ERHY, RR, and GN. His9 functions as the Tele-phosphohistidine intermediate in the catalytic mechanism. Glu87 (proton donor/acceptor) is an active-site residue.

The protein belongs to the phosphoglycerate mutase family. BPG-dependent PGAM subfamily.

It carries out the reaction (2R)-2-phosphoglycerate = (2R)-3-phosphoglycerate. Its pathway is carbohydrate degradation; glycolysis; pyruvate from D-glyceraldehyde 3-phosphate: step 3/5. Catalyzes the interconversion of 2-phosphoglycerate and 3-phosphoglycerate. The protein is 2,3-bisphosphoglycerate-dependent phosphoglycerate mutase of Bacillus cereus (strain ZK / E33L).